The primary structure comprises 171 residues: Adenine phosphoribosyltransferase (171 aa).

This sequence belongs to the purine/pyrimidine phosphoribosyltransferase family. Homodimer.

The protein localises to the cytoplasm. The enzyme catalyses AMP + diphosphate = 5-phospho-alpha-D-ribose 1-diphosphate + adenine. The protein operates within purine metabolism; AMP biosynthesis via salvage pathway; AMP from adenine: step 1/1. Its function is as follows. Catalyzes a salvage reaction resulting in the formation of AMP, that is energically less costly than de novo synthesis. This chain is Adenine phosphoribosyltransferase, found in Mycoplasma mobile (strain ATCC 43663 / 163K / NCTC 11711) (Mesomycoplasma mobile).